A 343-amino-acid chain; its full sequence is Probable magnesium transporter NIPA4 (343 aa).

Residues 1-18 lie on the Extracellular side of the membrane; sequence MAESSGSWRDSYKGMSSD. The helical transmembrane segment at 19 to 39 threads the bilayer; the sequence is NIKGLVLALSSSLFIGASFIV. The Cytoplasmic segment spans residues 40–66; it reads KKKGLKKAASTGTRAGVGGYSYLYEPL. A helical membrane pass occupies residues 67–87; the sequence is WWIGMTTMLLGEIANFAAYAF. The Extracellular segment spans residues 88–90; it reads APA. The chain crosses the membrane as a helical span at residues 91–111; sequence ILVTPLGAVSIIISAVLAHII. The Cytoplasmic segment spans residues 112 to 115; sequence LREK. Residues 116-136 traverse the membrane as a helical segment; sequence LHIFGILGCALCVVGSTTIVL. Topologically, residues 137 to 157 are extracellular; sequence HAPQEREIDSVIEVWNLATEP. The helical transmembrane segment at 158–178 threads the bilayer; that stretch reads AFMFYASLVIGAAVFLIIRFV. The Cytoplasmic portion of the chain corresponds to 179 to 189; that stretch reads PQYGQTNVMVY. A helical transmembrane segment spans residues 190 to 210; that stretch reads IGICSLVGSLSVMSVKALGIA. Residues 211-220 lie on the Extracellular side of the membrane; sequence LKLTFSGTNQ. Residues 221–241 traverse the membrane as a helical segment; that stretch reads LFYPQTWIFTLVVLTCVVTQL. At 242–254 the chain is on the cytoplasmic side; sequence NYLNKALDTFNTA. The helical transmembrane segment at 255–275 threads the bilayer; the sequence is IVSPIYYVMFTSLTILASVIM. Residues 276-283 are Extracellular-facing; it reads FKDWDRQN. The helical transmembrane segment at 284 to 304 threads the bilayer; that stretch reads GTQIVTEICGFVTILSGTFLL. Residues 305 to 343 lie on the Cytoplasmic side of the membrane; that stretch reads HRTKDMVEGSSVILPLRISKHINEEEGIPLRRQESLRSP.

Belongs to the NIPA (TC 2.A.7) family. As to quaternary structure, homodimer.

It is found in the cell membrane. The protein localises to the early endosome. In terms of biological role, acts as a Mg(2+) transporter. Can also transport other divalent cations such as Fe(2+), Sr(2+), Ba(2+), Mn(2+) and Co(2+) but to a much less extent than Mg(2+). The protein is Probable magnesium transporter NIPA4 of Arabidopsis thaliana (Mouse-ear cress).